The primary structure comprises 143 residues: Small ribosomal subunit protein uS12 (143 aa).

Residues 1–20 (MGKCRGLRTARKLRSHRRDQ) are compositionally biased toward basic residues. Residues 1 to 26 (MGKCRGLRTARKLRSHRRDQKWHDKQ) form a disordered region. Lys37 is covalently cross-linked (Glycyl lysine isopeptide (Lys-Gly) (interchain with G-Cter in SUMO2)). Lys54 carries the post-translational modification N6-succinyllysine. At Pro62 the chain carries 3-hydroxyproline. Lys135 carries the N6-acetyllysine modification.

It belongs to the universal ribosomal protein uS12 family. Component of the 40S small ribosomal subunit. Part of the small subunit (SSU) processome, composed of more than 70 proteins and the RNA chaperone small nucleolar RNA (snoRNA) U3. Hydroxylation at Pro-62 affects translation termination efficiency.

The protein resides in the cytoplasm. The protein localises to the cytosol. It is found in the rough endoplasmic reticulum. It localises to the nucleus. Its subcellular location is the nucleolus. In terms of biological role, component of the ribosome, a large ribonucleoprotein complex responsible for the synthesis of proteins in the cell. The small ribosomal subunit (SSU) binds messenger RNAs (mRNAs) and translates the encoded message by selecting cognate aminoacyl-transfer RNA (tRNA) molecules. The large subunit (LSU) contains the ribosomal catalytic site termed the peptidyl transferase center (PTC), which catalyzes the formation of peptide bonds, thereby polymerizing the amino acids delivered by tRNAs into a polypeptide chain. The nascent polypeptides leave the ribosome through a tunnel in the LSU and interact with protein factors that function in enzymatic processing, targeting, and the membrane insertion of nascent chains at the exit of the ribosomal tunnel. Plays an important role in translational accuracy. Part of the small subunit (SSU) processome, first precursor of the small eukaryotic ribosomal subunit. During the assembly of the SSU processome in the nucleolus, many ribosome biogenesis factors, an RNA chaperone and ribosomal proteins associate with the nascent pre-rRNA and work in concert to generate RNA folding, modifications, rearrangements and cleavage as well as targeted degradation of pre-ribosomal RNA by the RNA exosome. This is Small ribosomal subunit protein uS12 (RPS23) from Bos taurus (Bovine).